We begin with the raw amino-acid sequence, 351 residues long: Protein RecA (351 aa).

Gly-67–Thr-74 contacts ATP.

This sequence belongs to the RecA family.

The protein localises to the cytoplasm. Functionally, can catalyze the hydrolysis of ATP in the presence of single-stranded DNA, the ATP-dependent uptake of single-stranded DNA by duplex DNA, and the ATP-dependent hybridization of homologous single-stranded DNAs. It interacts with LexA causing its activation and leading to its autocatalytic cleavage. This Mannheimia succiniciproducens (strain KCTC 0769BP / MBEL55E) protein is Protein RecA.